Consider the following 499-residue polypeptide: 3-octaprenyl-4-hydroxybenzoate carboxy-lyase (499 aa).

A Mn(2+)-binding site is contributed by Asn173. Residues 176–178, 190–192, and 195–196 each bind prenylated FMN; these read IYR, RWL, and RG. Glu239 serves as a coordination point for Mn(2+). Asp288 (proton donor) is an active-site residue.

This sequence belongs to the UbiD family. In terms of assembly, homohexamer. Prenylated FMN serves as cofactor. It depends on Mn(2+) as a cofactor.

The protein localises to the cell membrane. It carries out the reaction a 4-hydroxy-3-(all-trans-polyprenyl)benzoate + H(+) = a 2-(all-trans-polyprenyl)phenol + CO2. It participates in cofactor biosynthesis; ubiquinone biosynthesis. Functionally, catalyzes the decarboxylation of 3-octaprenyl-4-hydroxy benzoate to 2-octaprenylphenol, an intermediate step in ubiquinone biosynthesis. The protein is 3-octaprenyl-4-hydroxybenzoate carboxy-lyase of Blochmanniella floridana.